A 147-amino-acid polypeptide reads, in one-letter code: Large ribosomal subunit protein uL13 (147 aa).

This sequence belongs to the universal ribosomal protein uL13 family. In terms of assembly, part of the 50S ribosomal subunit.

Functionally, this protein is one of the early assembly proteins of the 50S ribosomal subunit, although it is not seen to bind rRNA by itself. It is important during the early stages of 50S assembly. This Mycolicibacterium paratuberculosis (strain ATCC BAA-968 / K-10) (Mycobacterium paratuberculosis) protein is Large ribosomal subunit protein uL13.